Consider the following 284-residue polypeptide: Bifunctional protein FolD (284 aa).

Residues 166–168 (GAS) and Ile232 each bind NADP(+).

The protein belongs to the tetrahydrofolate dehydrogenase/cyclohydrolase family. Homodimer.

The catalysed reaction is (6R)-5,10-methylene-5,6,7,8-tetrahydrofolate + NADP(+) = (6R)-5,10-methenyltetrahydrofolate + NADPH. The enzyme catalyses (6R)-5,10-methenyltetrahydrofolate + H2O = (6R)-10-formyltetrahydrofolate + H(+). It participates in one-carbon metabolism; tetrahydrofolate interconversion. Its function is as follows. Catalyzes the oxidation of 5,10-methylenetetrahydrofolate to 5,10-methenyltetrahydrofolate and then the hydrolysis of 5,10-methenyltetrahydrofolate to 10-formyltetrahydrofolate. This chain is Bifunctional protein FolD, found in Pseudoalteromonas translucida (strain TAC 125).